We begin with the raw amino-acid sequence, 172 residues long: Adenine phosphoribosyltransferase (172 aa).

This sequence belongs to the purine/pyrimidine phosphoribosyltransferase family. As to quaternary structure, homodimer.

It is found in the cytoplasm. It carries out the reaction AMP + diphosphate = 5-phospho-alpha-D-ribose 1-diphosphate + adenine. Its pathway is purine metabolism; AMP biosynthesis via salvage pathway; AMP from adenine: step 1/1. Its function is as follows. Catalyzes a salvage reaction resulting in the formation of AMP, that is energically less costly than de novo synthesis. The polypeptide is Adenine phosphoribosyltransferase (Lactiplantibacillus plantarum (strain ATCC BAA-793 / NCIMB 8826 / WCFS1) (Lactobacillus plantarum)).